Consider the following 201-residue polypeptide: Oligoribonuclease (201 aa).

The 165-residue stretch at 5–169 (MVWIDCEMTG…ADIRDSITEL (165 aa)) folds into the Exonuclease domain. Y126 is an active-site residue.

Belongs to the oligoribonuclease family.

Its subcellular location is the cytoplasm. Functionally, 3'-to-5' exoribonuclease specific for small oligoribonucleotides. The protein is Oligoribonuclease of Streptomyces griseus.